Reading from the N-terminus, the 298-residue chain is Protease HtpX (298 aa).

A run of 2 helical transmembrane segments spans residues 4 to 24 (IALY…TLSL) and 41 to 61 (TSLL…SLLI). H147 contacts Zn(2+). Residue E148 is part of the active site. Zn(2+) is bound at residue H151. The next 2 membrane-spanning stretches (helical) occupy residues 162–182 (LIQG…GYVI) and 193–213 (GLGF…GIAA). E225 contacts Zn(2+).

This sequence belongs to the peptidase M48B family. Zn(2+) serves as cofactor.

The protein resides in the cell inner membrane. This Alcanivorax borkumensis (strain ATCC 700651 / DSM 11573 / NCIMB 13689 / SK2) protein is Protease HtpX.